Consider the following 139-residue polypeptide: Endoribonuclease YbeY (139 aa).

Zn(2+) contacts are provided by His-110, His-114, and His-120.

It belongs to the endoribonuclease YbeY family. It depends on Zn(2+) as a cofactor.

Its subcellular location is the cytoplasm. Its function is as follows. Single strand-specific metallo-endoribonuclease involved in late-stage 70S ribosome quality control and in maturation of the 3' terminus of the 16S rRNA. This Thermus thermophilus (strain ATCC BAA-163 / DSM 7039 / HB27) protein is Endoribonuclease YbeY.